The chain runs to 548 residues: (2S)-methylsuccinyl-CoA dehydrogenase (548 aa).

Residues 282–291 and 315–317 contribute to the FAD site; these read AVFTEPNTGS and WIT. Residue Ser291 coordinates substrate. Substrate is bound at residue 409–412; sequence ESAR. Residues Arg437 and 505–509 contribute to the FAD site; that span reads QIHGG. Residue Glu532 is the Proton acceptor of the active site. 534-536 serves as a coordination point for FAD; that stretch reads AAE.

The protein belongs to the acyl-CoA dehydrogenase family. Homodimer. It depends on FAD as a cofactor.

The enzyme catalyses (2S)-methylsuccinyl-CoA + oxidized [electron-transfer flavoprotein] + H(+) = 2-methylfumaryl-CoA + reduced [electron-transfer flavoprotein]. Functionally, involved in the ethylmalonyl-CoA pathway, a new acetyl-CoA assimilation strategy that operates in a number of bacteria and replaces the glyoxylate cycle. Catalyzes the oxidation of (2S)-methylsuccinyl-CoA to yield mesaconyl-(C1)-CoA. Highly specific for (S)-methylsuccinyl-CoA. The polypeptide is (2S)-methylsuccinyl-CoA dehydrogenase (Cereibacter sphaeroides (Rhodobacter sphaeroides)).